Here is a 553-residue protein sequence, read N- to C-terminus: Salicylyl-CoA synthase / salicylate adenylyltransferase (553 aa).

Gly-203 contacts ATP. 246-247 is a substrate binding site; that stretch reads HN. Residues Gly-320, Val-342, Asp-426, Arg-441, and Lys-533 each coordinate ATP. Lys-533 contacts substrate.

The protein belongs to the ATP-dependent AMP-binding enzyme family.

The catalysed reaction is salicylate + ATP + CoA = 2-hydroxybenzoyl-CoA + AMP + diphosphate. Functionally, involved in the degradation of salicylate via a pathway involving coenzyme A derivative. Catalyzes the conversion of salicylate to salicyloyl-CoA via the formation of a salicylate-adenylate intermediate. The substrate specificity is strong, since benzoate, 3-hydroxybenzoate, 4-hydroxybenzoate, gentisate, 2-aminobenzoate, aminobenzoate, salicylamide, salicylaldoxime and 2-hydroxyphenyl acetate cannot substitute for salicylate. This Streptomyces sp protein is Salicylyl-CoA synthase / salicylate adenylyltransferase.